The sequence spans 548 residues: ATP synthase subunit alpha (548 aa).

172–179 (GDRKTGKT) serves as a coordination point for ATP. Residues 526 to 548 (AEAMDEADVEKESVKVRKPAPKK) form a disordered region.

This sequence belongs to the ATPase alpha/beta chains family. As to quaternary structure, F-type ATPases have 2 components, CF(1) - the catalytic core - and CF(0) - the membrane proton channel. CF(1) has five subunits: alpha(3), beta(3), gamma(1), delta(1), epsilon(1). CF(0) has three main subunits: a(1), b(2) and c(9-12). The alpha and beta chains form an alternating ring which encloses part of the gamma chain. CF(1) is attached to CF(0) by a central stalk formed by the gamma and epsilon chains, while a peripheral stalk is formed by the delta and b chains.

Its subcellular location is the cell membrane. The enzyme catalyses ATP + H2O + 4 H(+)(in) = ADP + phosphate + 5 H(+)(out). Functionally, produces ATP from ADP in the presence of a proton gradient across the membrane. The alpha chain is a regulatory subunit. In Mycolicibacterium vanbaalenii (strain DSM 7251 / JCM 13017 / BCRC 16820 / KCTC 9966 / NRRL B-24157 / PYR-1) (Mycobacterium vanbaalenii), this protein is ATP synthase subunit alpha.